Consider the following 675-residue polypeptide: Potassium-transporting ATPase ATP-binding subunit (675 aa).

4 consecutive transmembrane segments (helical) span residues 34–54 (IMFVVEVGMILTLILICFPDI), 65–85 (LITIFIILLITILFANFSEAF), 216–236 (IALFTLLTTLTIIFLVVIVTL), and 245–265 (LILPIAMLIALTVCLIPTTIG). Asp304 acts as the 4-aspartylphosphate intermediate in catalysis. Residues Asp341, Glu345, 372 to 379 (FTAETRMS), and Lys390 contribute to the ATP site. Positions 513 and 517 each coordinate Mg(2+). The next 3 membrane-spanning stretches (helical) occupy residues 569–591 (ALTTFSLANDVAKYFAILPALMM), 611–631 (AIISALIFNALIIVALIPIAM), and 644–664 (IFINNMLIYGLGGLIVPFLGI).

It belongs to the cation transport ATPase (P-type) (TC 3.A.3) family. Type IA subfamily. The system is composed of three essential subunits: KdpA, KdpB and KdpC.

The protein resides in the cell membrane. It catalyses the reaction K(+)(out) + ATP + H2O = K(+)(in) + ADP + phosphate + H(+). In terms of biological role, part of the high-affinity ATP-driven potassium transport (or Kdp) system, which catalyzes the hydrolysis of ATP coupled with the electrogenic transport of potassium into the cytoplasm. This subunit is responsible for energy coupling to the transport system and for the release of the potassium ions to the cytoplasm. This chain is Potassium-transporting ATPase ATP-binding subunit, found in Staphylococcus aureus (strain MSSA476).